We begin with the raw amino-acid sequence, 624 residues long: Probable Xaa-Pro aminopeptidase P (624 aa).

Mn(2+) contacts are provided by Asp-414, Asp-425, Glu-530, and Glu-544.

Belongs to the peptidase M24B family. The cofactor is Mn(2+).

It catalyses the reaction Release of any N-terminal amino acid, including proline, that is linked to proline, even from a dipeptide or tripeptide.. Catalyzes the removal of a penultimate prolyl residue from the N-termini of peptides. The sequence is that of Probable Xaa-Pro aminopeptidase P (AMPP) from Chaetomium globosum (strain ATCC 6205 / CBS 148.51 / DSM 1962 / NBRC 6347 / NRRL 1970) (Soil fungus).